The following is a 1411-amino-acid chain: Tectonin beta-propeller repeat-containing protein 2 (1411 aa).

WD repeat units lie at residues 23–66 (IPTK…HLNQ), 67–114 (MRKY…PGRN), 115–161 (KQLR…LDQG), 162–203 (LCNS…EKSV), 204–265 (RQIG…AGGV), 266–309 (KPFE…EYSI), and 310–343 (YLLDTVNQATVAGLEGSGDIVSVSCTENEIFFLK). Disordered stretches follow at residues 379 to 439 (QAEK…GSQP), 463 to 542 (VKRK…QENT), 579 to 637 (RELL…GPQS), and 758 to 779 (YAHGLPSSSSETSVTELGPSCS). Positions 400–420 (SSVASEPRSRSSSLNSTDSGS) are enriched in low complexity. Polar residues-rich tracts occupy residues 475 to 489 (GSRSTCHSSLESTPC), 496 to 542 (SPQS…QENT), 608 to 621 (PNSTQLPFQEQDSS), and 763 to 779 (PSSSSETSVTELGPSCS). TECPR repeat units lie at residues 945-976 (NVVWALTEQRALLYREGVSSFCPEGEQWKCDI), 994-1027 (QTLWALDIHGNLWFRTGIISKKPQGDDDHWWQVS), 1179-1209 (DALWALDSLGQVFIRTLSKSCPTGMHWTRLD), 1226-1259 (QHIWACDSRGGVYFRVGTQPLNPSLMLPAWIMIE), 1279-1310 (QMLWVLDSRWNVHVRTGITEEMPVGTAWEHVP), and 1322-1353 (RTVWARCPNGDLARRYGVTDKNPAGDYWKKIP). Residues 1388–1411 (HGTQKSSQAAMPHPEDLEDEWEVI) are disordered.

The protein belongs to the WD repeat KIAA0329 family. Interacts with the ATG8 family members GABARAP, GABARAPL1, GABARAPL2, MAP1LC3B and MAP1LC3C. In terms of tissue distribution, detected in skin fibroblast (at protein level).

Probably plays a role as positive regulator of autophagy. The chain is Tectonin beta-propeller repeat-containing protein 2 (TECPR2) from Homo sapiens (Human).